A 1124-amino-acid polypeptide reads, in one-letter code: Phytochrome A1 (1124 aa).

Over residues M1–A14 the composition is skewed to low complexity. Positions M1–A20 are disordered. Residues S218–L401 enclose the GAF domain. C323 is a phytochromobilin binding site. One can recognise a PAS 1 domain in the interval V617 to K687. The 57-residue stretch at R690–R746 folds into the PAC domain. Positions I747 to G821 constitute a PAS 2 domain. The Histidine kinase domain occupies Y901–V1118.

The protein belongs to the phytochrome family. Homodimer. Contains one covalently linked phytochromobilin chromophore.

In terms of biological role, regulatory photoreceptor which exists in two forms that are reversibly interconvertible by light: the Pr form that absorbs maximally in the red region of the spectrum and the Pfr form that absorbs maximally in the far-red region. Photoconversion of Pr to Pfr induces an array of morphogenic responses, whereas reconversion of Pfr to Pr cancels the induction of those responses. Pfr controls the expression of a number of nuclear genes including those encoding the small subunit of ribulose-bisphosphate carboxylase, chlorophyll A/B binding protein, protochlorophyllide reductase, rRNA, etc. It also controls the expression of its own gene(s) in a negative feedback fashion. This Nicotiana tabacum (Common tobacco) protein is Phytochrome A1 (PHYA1).